Reading from the N-terminus, the 598-residue chain is NADH-quinone oxidoreductase subunit C/D (598 aa).

The NADH dehydrogenase I subunit C stretch occupies residues 1-189; it reads MTDQIAQNSA…DPYVLTKQKE (189 aa). The segment at 213 to 598 is NADH dehydrogenase I subunit D; the sequence is DFMFLNLGPN…IDFVMSDVDR (386 aa).

It in the N-terminal section; belongs to the complex I 30 kDa subunit family. This sequence in the C-terminal section; belongs to the complex I 49 kDa subunit family. As to quaternary structure, NDH-1 is composed of 13 different subunits. Subunits NuoB, CD, E, F, and G constitute the peripheral sector of the complex.

The protein resides in the cell inner membrane. It carries out the reaction a quinone + NADH + 5 H(+)(in) = a quinol + NAD(+) + 4 H(+)(out). Functionally, NDH-1 shuttles electrons from NADH, via FMN and iron-sulfur (Fe-S) centers, to quinones in the respiratory chain. The immediate electron acceptor for the enzyme in this species is believed to be ubiquinone. Couples the redox reaction to proton translocation (for every two electrons transferred, four hydrogen ions are translocated across the cytoplasmic membrane), and thus conserves the redox energy in a proton gradient. This is NADH-quinone oxidoreductase subunit C/D from Proteus mirabilis (strain HI4320).